Here is a 916-residue protein sequence, read N- to C-terminus: Protein translocase subunit SecA (916 aa).

Residues glutamine 87, 105 to 109, and aspartate 507 each bind ATP; that span reads GEGKT. Zn(2+) is bound by residues cysteine 900, cysteine 902, cysteine 911, and histidine 912.

This sequence belongs to the SecA family. As to quaternary structure, monomer and homodimer. Part of the essential Sec protein translocation apparatus which comprises SecA, SecYEG and auxiliary proteins SecDF-YajC and YidC. Zn(2+) is required as a cofactor.

The protein resides in the cell inner membrane. Its subcellular location is the cytoplasm. It carries out the reaction ATP + H2O + cellular proteinSide 1 = ADP + phosphate + cellular proteinSide 2.. Functionally, part of the Sec protein translocase complex. Interacts with the SecYEG preprotein conducting channel. Has a central role in coupling the hydrolysis of ATP to the transfer of proteins into and across the cell membrane, serving both as a receptor for the preprotein-SecB complex and as an ATP-driven molecular motor driving the stepwise translocation of polypeptide chains across the membrane. The chain is Protein translocase subunit SecA from Neisseria meningitidis serogroup C (strain 053442).